A 28-amino-acid chain; its full sequence is Cycloviolin-B (28 aa).

The segment at residues 1-28 (GTACGESCYVLPCFTVGCTCTSSQCFKN) is a cross-link (cyclopeptide (Gly-Asn)). 3 cysteine pairs are disulfide-bonded: Cys4-Cys18, Cys8-Cys20, and Cys13-Cys25.

Post-translationally, this is a cyclic peptide.

Probably participates in a plant defense mechanism. Has anti-HIV activity. This Leonia cymosa (Sacha uba) protein is Cycloviolin-B.